Consider the following 492-residue polypeptide: Catalase isozyme 2 (492 aa).

Catalysis depends on residues H65 and N138. Y347 is a binding site for heme.

It belongs to the catalase family. In terms of assembly, homotetramer. It depends on heme as a cofactor. High levels in green cotyledons, mature leaf, stem and green hypocotyl.

The protein localises to the peroxisome. The catalysed reaction is 2 H2O2 = O2 + 2 H2O. In terms of biological role, occurs in almost all aerobically respiring organisms and serves to protect cells from the toxic effects of hydrogen peroxide. This is Catalase isozyme 2 (CAT2) from Cucurbita pepo (Vegetable marrow).